The following is a 187-amino-acid chain: Peptide deformylase (187 aa).

2 residues coordinate Fe cation: Cys94 and His136. Residue Glu137 is part of the active site. Residue His140 participates in Fe cation binding.

It belongs to the polypeptide deformylase family. The cofactor is Fe(2+).

It catalyses the reaction N-terminal N-formyl-L-methionyl-[peptide] + H2O = N-terminal L-methionyl-[peptide] + formate. Its function is as follows. Removes the formyl group from the N-terminal Met of newly synthesized proteins. Requires at least a dipeptide for an efficient rate of reaction. N-terminal L-methionine is a prerequisite for activity but the enzyme has broad specificity at other positions. The chain is Peptide deformylase from Chlorobaculum parvum (strain DSM 263 / NCIMB 8327) (Chlorobium vibrioforme subsp. thiosulfatophilum).